Consider the following 340-residue polypeptide: Holliday junction branch migration complex subunit RuvB (340 aa).

A large ATPase domain (RuvB-L) region spans residues M1–Y184. Residues L23, R24, G65, K68, T69, T70, E131–F133, R174, Y184, and R221 contribute to the ATP site. T69 serves as a coordination point for Mg(2+). The interval N185–H255 is small ATPAse domain (RuvB-S). The segment at A258–F340 is head domain (RuvB-H). DNA-binding residues include R313 and R318.

The protein belongs to the RuvB family. As to quaternary structure, homohexamer. Forms an RuvA(8)-RuvB(12)-Holliday junction (HJ) complex. HJ DNA is sandwiched between 2 RuvA tetramers; dsDNA enters through RuvA and exits via RuvB. An RuvB hexamer assembles on each DNA strand where it exits the tetramer. Each RuvB hexamer is contacted by two RuvA subunits (via domain III) on 2 adjacent RuvB subunits; this complex drives branch migration. In the full resolvosome a probable DNA-RuvA(4)-RuvB(12)-RuvC(2) complex forms which resolves the HJ.

The protein localises to the cytoplasm. The catalysed reaction is ATP + H2O = ADP + phosphate + H(+). In terms of biological role, the RuvA-RuvB-RuvC complex processes Holliday junction (HJ) DNA during genetic recombination and DNA repair, while the RuvA-RuvB complex plays an important role in the rescue of blocked DNA replication forks via replication fork reversal (RFR). RuvA specifically binds to HJ cruciform DNA, conferring on it an open structure. The RuvB hexamer acts as an ATP-dependent pump, pulling dsDNA into and through the RuvAB complex. RuvB forms 2 homohexamers on either side of HJ DNA bound by 1 or 2 RuvA tetramers; 4 subunits per hexamer contact DNA at a time. Coordinated motions by a converter formed by DNA-disengaged RuvB subunits stimulates ATP hydrolysis and nucleotide exchange. Immobilization of the converter enables RuvB to convert the ATP-contained energy into a lever motion, pulling 2 nucleotides of DNA out of the RuvA tetramer per ATP hydrolyzed, thus driving DNA branch migration. The RuvB motors rotate together with the DNA substrate, which together with the progressing nucleotide cycle form the mechanistic basis for DNA recombination by continuous HJ branch migration. Branch migration allows RuvC to scan DNA until it finds its consensus sequence, where it cleaves and resolves cruciform DNA. This chain is Holliday junction branch migration complex subunit RuvB, found in Flavobacterium psychrophilum (strain ATCC 49511 / DSM 21280 / CIP 103535 / JIP02/86).